Reading from the N-terminus, the 313-residue chain is Ribosomal RNA small subunit methyltransferase H (313 aa).

S-adenosyl-L-methionine is bound by residues 35–37, aspartate 55, phenylalanine 80, aspartate 102, and glutamine 109; that span reads GGH.

This sequence belongs to the methyltransferase superfamily. RsmH family.

The protein resides in the cytoplasm. It catalyses the reaction cytidine(1402) in 16S rRNA + S-adenosyl-L-methionine = N(4)-methylcytidine(1402) in 16S rRNA + S-adenosyl-L-homocysteine + H(+). Functionally, specifically methylates the N4 position of cytidine in position 1402 (C1402) of 16S rRNA. This is Ribosomal RNA small subunit methyltransferase H from Shewanella woodyi (strain ATCC 51908 / MS32).